The sequence spans 462 residues: Elongation factor 1-alpha 1 (462 aa).

The residue at position 2 (glycine 2) is a N,N,N-trimethylglycine. The 238-residue stretch at 5–242 (KTHINIVVIG…DCILPPTRPT (238 aa)) folds into the tr-type G domain. The segment at 14-21 (GHVDSGKS) is G1. GTP is bound at residue 14–21 (GHVDSGKS). Residues 70 to 74 (GITID) are G2. A G3 region spans residues 91–94 (DAPG). Residues 153 to 156 (NKMD) and 194 to 196 (SGW) each bind GTP. Residues 153 to 156 (NKMD) form a G4 region. The segment at 194–196 (SGW) is G5. Glutamate 301 and glutamate 374 each carry 5-glutamyl glycerylphosphorylethanolamine.

This sequence belongs to the TRAFAC class translation factor GTPase superfamily. Classic translation factor GTPase family. EF-Tu/EF-1A subfamily.

It localises to the cytoplasm. It catalyses the reaction GTP + H2O = GDP + phosphate + H(+). Translation elongation factor that catalyzes the GTP-dependent binding of aminoacyl-tRNA (aa-tRNA) to the A-site of ribosomes during the elongation phase of protein synthesis. Base pairing between the mRNA codon and the aa-tRNA anticodon promotes GTP hydrolysis, releasing the aa-tRNA from EEF1A1 and allowing its accommodation into the ribosome. The growing protein chain is subsequently transferred from the P-site peptidyl tRNA to the A-site aa-tRNA, extending it by one amino acid through ribosome-catalyzed peptide bond formation. The polypeptide is Elongation factor 1-alpha 1 (EEF1A) (Gallus gallus (Chicken)).